The following is a 331-amino-acid chain: Putative ankyrin repeat protein FPV012 (331 aa).

ANK repeat units follow at residues 11–40 (DGYT…NPNT), 44–73 (DSYT…NVDK), 77–106 (DGYT…NPNY), and 110–139 (YGIT…NCNQ).

The polypeptide is Putative ankyrin repeat protein FPV012 (Vertebrata (FPV)).